A 297-amino-acid chain; its full sequence is Virulence genes transcriptional activator SpvR (297 aa).

Residues M1 to T61 enclose the HTH lysR-type domain. The segment at residues F21–S40 is a DNA-binding region (H-T-H motif).

This sequence belongs to the LysR transcriptional regulatory family.

It localises to the cytoplasm. Positive regulator for the plasmid-encoded virulence factors SpvA, SpvB, and SpvC. The sequence is that of Virulence genes transcriptional activator SpvR (spvR) from Salmonella dublin.